We begin with the raw amino-acid sequence, 2228 residues long: Genome polyprotein (2228 aa).

A disordered region spans residues 56-76 (AEVGAHQSEPLKTSVDKPGSK). 2 short sequence motifs ((L)YPX(n)L motif) span residues 167–171 (YPHGL) and 200–205 (YPVWEL). An involved in P1-2A pentamerization region spans residues 766-836 (MLDRIALGDL…PRKIKGVFSQ (71 aa)). Residues 1011-1031 (TVEIINTVLCFVKSGILLYVI) form a helical membrane-spanning segment. A membrane-penetrating ability region spans residues 1043 to 1070 (IGLLRVMNYADIGCSVISCGKVFSKMLE). The stretch at 1127–1152 (NKKDVLNILKDNQQKIERAIEEADNF) forms a coiled coil. In terms of domain architecture, SF3 helicase spans 1204 to 1366 (HQKLKNLGSI…SFFKNPHNDM (163 aa)). 1230 to 1237 (GKRGGGKS) provides a ligand contact to ATP. Residues 1462–1482 (WVAVGAAVGVLGVLVGGWYVY) traverse the membrane as a helical segment. An O-(5'-phospho-RNA)-tyrosine modification is found at Tyr-1499. The 215-residue stretch at 1514–1728 (DPVESQSTLE…VAKLVTQEMF (215 aa)) folds into the Peptidase C3 domain. Catalysis depends on for protease 3C activity residues His-1563, Asp-1603, and Cys-1691. Residues 1977–2098 (DVGLDLDFSA…VFSRQVQFDN (122 aa)) form the RdRp catalytic domain.

Belongs to the picornaviridae polyprotein family. In terms of assembly, homodimer. Homomultimer; probably interacts with membranes in a multimeric form. Seems to assemble into amyloid-like fibers. Homodimer. Monomer. Interacts with protein 3CD. As to quaternary structure, interacts with host ACBD3. In terms of assembly, interacts with protein 3AB. Interacts with human MAVS. As to quaternary structure, homodimer; disulfide-linked. In terms of assembly, homopentamer. Homooligomer. Interacts with capsid protein VP2. Interacts with capsid protein VP3. As to quaternary structure, interacts with capsid protein VP1. Interacts with capsid protein VP3. In terms of assembly, interacts with capsid protein VP1. Interacts with capsid protein VP2. Specific enzymatic cleavages by viral protease in vivo yield a variety of precursors and mature proteins. Polyprotein processing intermediates are produced, such as P1-2A which is a functional precursor of the structural proteins, VP0 which is a VP4-VP2 precursor, VP1-2A precursor, 3ABC precursor which is a stable and catalytically active precursor of 3A, 3B and 3C proteins, 3AB and 3CD precursors. The assembly signal 2A is removed from VP1-2A by a host protease, possibly host Cathepsin L. This cleavage occurs over a region of 3 amino-acids probably generating VP1 proteins with heterogeneous C-termini. Post-translationally, during virion maturation, immature virions are rendered infectious following cleavage of VP0 into VP4 and VP2. This maturation seems to be an autocatalytic event triggered by the presence of RNA in the capsid and is followed by a conformational change of the particle. In terms of processing, the assembly signal 2A is removed from VP1-2A by a host protease, possibly host Cathepsin L in naked virions. This cleavage does not occur in enveloped virions. This cleavage occurs over a region of 3 amino-acids probably generating VP1 proteins with heterogeneous C-termini. VPg is uridylylated prior to priming replication into VPg-pUpU. Post-translationally, unlike other picornaviruses, does not seem to be myristoylated.

Its subcellular location is the virion. It localises to the host endosome. It is found in the host multivesicular body. The protein localises to the host membrane. The protein resides in the host mitochondrion outer membrane. Its subcellular location is the host cytoplasm. It localises to the host cytoplasmic vesicle membrane. It carries out the reaction RNA(n) + a ribonucleoside 5'-triphosphate = RNA(n+1) + diphosphate. The enzyme catalyses a ribonucleoside 5'-triphosphate + H2O = a ribonucleoside 5'-diphosphate + phosphate + H(+). The catalysed reaction is Selective cleavage of Gln-|-Gly bond in the poliovirus polyprotein. In other picornavirus reactions Glu may be substituted for Gln, and Ser or Thr for Gly.. Its function is as follows. Capsid proteins VP1, VP2, and VP3 form a closed capsid enclosing the viral positive strand RNA genome. All these proteins contain a beta-sheet structure called beta-barrel jelly roll. Together they form an icosahedral capsid (T=3) composed of 60 copies of each VP1, VP2, and VP3, with a diameter of approximately 300 Angstroms. VP1 is situated at the 12 fivefold axes, whereas VP2 and VP3 are located at the quasi-sixfold axes. The naked capsid interacts with the host receptor HAVCR1 to provide virion attachment to and probably entry into the target cell. In terms of biological role, VP0 precursor is a component of the immature procapsids. Plays a role in the assembly of the 12 pentamers into an icosahedral structure. Has not been detected in mature virions, supposedly owing to its small size. Functionally, precursor component of immature procapsids that corresponds to an extended form of the structural protein VP1. After maturation, possibly by the host Cathepsin L, the assembly signal 2A is cleaved to give rise to the mature VP1 protein. Its function is as follows. Functions as a viroporin. Affects membrane integrity and causes an increase in membrane permeability. Involved in host intracellular membrane rearrangements probably to give rise to the viral factories. Does not disrupt calcium homeostasis or glycoprotein trafficking. Antagonizes the innate immune response of the host by suppressing IFN-beta synthesis, which it achieves by interfering with the RIG-I/IFIH1 pathway. In terms of biological role, affects membrane integrity and causes an increase in membrane permeability. Associates with and induces structural rearrangements of intracellular membranes. Displays RNA-binding activity. Functionally, the precursor 3ABC is targeted to the mitochondrial membrane where protease 3C activity cleaves and inhibits the host antiviral protein MAVS, thereby disrupting activation of IRF3 through the IFIH1/MDA5 pathway. In vivo, the protease activity of 3ABC precursor is more efficient in cleaving the 2BC precursor than that of protein 3C. The 3ABC precursor may therefore play a role in the proteolytic processing of the polyprotein. Possible viroporin. Its function is as follows. Interacts with the 3CD precursor and with RNA structures found at both the 5'- and 3'-termini of the viral genome. Since the 3AB precursor contains the hydrophobic domain 3A, it probably anchors the whole viral replicase complex to intracellular membranes on which viral RNA synthesis occurs. In terms of biological role, may serve as membrane anchor to the 3AB and 3ABC precursors via its hydrophobic domain. May interact with RNA. Acts as a primer for viral RNA replication and remains covalently bound to viral genomic RNA. VPg is uridylylated prior to priming replication into VPg-pUpU. The VPg-pUpU is then used as primer on the genomic RNA poly(A) by the RNA-dependent RNA polymerase to replicate the viral genome. Functionally, cysteine protease that generates mature viral proteins from the precursor polyprotein. In addition to its proteolytic activity, it binds to viral RNA, and thus influences viral genome replication. RNA and substrate bind cooperatively to the protease. Cleaves IKBKG/NEMO to impair innate immune signaling. Cleaves host PABPC1 which may participate in the switch of viral translation to RNA synthesis. Its function is as follows. Interacts with the 3AB precursor and with RNA structures found at both the 5'- and 3'-termini of the viral genome. Disrupts TLR3 signaling by degrading the host adapter protein TICAM1/TRIF. In terms of biological role, RNA-directed RNA polymerase 3D-POL replicates genomic and antigenomic RNA by recognizing replications specific signals. The polypeptide is Genome polyprotein (Cercopithecus hamlyni (Owl-faced monkey)).